The primary structure comprises 878 residues: Indoleacetate decarboxylase (878 aa).

The 709-residue stretch at D42–L750 folds into the PFL domain. C500 serves as the catalytic Cysteine radical intermediate. E502 acts as the Proton acceptor in catalysis. A Glycine radical domain is found at G758–L878. G853 bears the Glycine radical mark.

It belongs to the glycyl radical enzyme (GRE) family. As to quaternary structure, homodimer (predominantly) and monomer. Post-translationally, requires the activating protein OsIADAE to generate the key active site glycyl radical on Gly-853 that is involved in catalysis.

The catalysed reaction is (indol-3-yl)acetate + H(+) = skatole + CO2. It functions in the pathway amino-acid degradation. In terms of biological role, glycyl radical enzyme that catalyzes the terminal step of tryptophan fermentation, the decarboxylation of indoleacetate to form skatole, a malodorous compound that contributes to the characteristic smell of animal feces. No activity is detected with phenylacetate or p-hydroxyphenylacetate as substrates, indicating high substrate specificity. The polypeptide is Indoleacetate decarboxylase (Tractidigestivibacter scatoligenes (Olsenella scatoligenes)).